The following is a 147-amino-acid chain: Protein phosphatase 1 regulatory subunit 14A (147 aa).

The segment covering 1–11 (MAAQRLGKRVL) has biased composition (basic residues). Positions 1–36 (MAAQRLGKRVLSKLQSPSRARGPGGSPSGLQKRHAR) are disordered. A Phosphoserine modification is found at Ser-26. Positions 35 to 120 (ARVTVKYDRR…LLAKLRGLHK (86 aa)) are inhibitory. Thr-38 is modified (phosphothreonine; by PKC). A disordered region spans residues 118–147 (LHKQPGFPQPSPSDDPSLSPRQDRAHTAPP). A phosphoserine mark is found at Ser-128, Ser-134, and Ser-136. Over residues 138 to 147 (RQDRAHTAPP) the composition is skewed to basic and acidic residues.

The protein belongs to the PP1 inhibitor family.

The protein resides in the cytoplasm. Its function is as follows. Inhibitor of PPP1CA. Has over 1000-fold higher inhibitory activity when phosphorylated, creating a molecular switch for regulating the phosphorylation status of PPP1CA substrates and smooth muscle contraction. In Mus musculus (Mouse), this protein is Protein phosphatase 1 regulatory subunit 14A (Ppp1r14a).